We begin with the raw amino-acid sequence, 302 residues long: Probable 5-dehydro-4-deoxyglucarate dehydratase (302 aa).

Belongs to the DapA family.

The enzyme catalyses 5-dehydro-4-deoxy-D-glucarate + H(+) = 2,5-dioxopentanoate + CO2 + H2O. Its pathway is carbohydrate acid metabolism; D-glucarate degradation; 2,5-dioxopentanoate from D-glucarate: step 2/2. In Rhizobium rhizogenes (strain K84 / ATCC BAA-868) (Agrobacterium radiobacter), this protein is Probable 5-dehydro-4-deoxyglucarate dehydratase.